Here is a 227-residue protein sequence, read N- to C-terminus: 2,3-bisphosphoglycerate-dependent phosphoglycerate mutase (227 aa).

Substrate is bound by residues 7 to 14, 20 to 21, Arg-59, 86 to 89, Lys-97, 113 to 114, and 182 to 183; these read RHGQSEWN, TG, ERHY, RR, and GN. His-8 functions as the Tele-phosphohistidine intermediate in the catalytic mechanism. Residue Glu-86 is the Proton donor/acceptor of the active site.

This sequence belongs to the phosphoglycerate mutase family. BPG-dependent PGAM subfamily. As to quaternary structure, homodimer.

The enzyme catalyses (2R)-2-phosphoglycerate = (2R)-3-phosphoglycerate. It participates in carbohydrate degradation; glycolysis; pyruvate from D-glyceraldehyde 3-phosphate: step 3/5. Its function is as follows. Catalyzes the interconversion of 2-phosphoglycerate and 3-phosphoglycerate. This chain is 2,3-bisphosphoglycerate-dependent phosphoglycerate mutase, found in Neisseria meningitidis serogroup A / serotype 4A (strain DSM 15465 / Z2491).